The chain runs to 239 residues: Probable transcriptional regulatory protein MG332 (239 aa).

The protein belongs to the TACO1 family.

Its subcellular location is the cytoplasm. In Mycoplasma genitalium (strain ATCC 33530 / DSM 19775 / NCTC 10195 / G37) (Mycoplasmoides genitalium), this protein is Probable transcriptional regulatory protein MG332.